Reading from the N-terminus, the 580-residue chain is 2-hydroxyacyl-CoA lyase 1 (580 aa).

Glu47 contacts thiamine diphosphate. The interval 413 to 494 is thiamine pyrophosphate binding; the sequence is TMDIGRLCIP…FIVLNNNGVY (82 aa). Mg(2+)-binding residues include Asp463 and Asn490.

It belongs to the TPP enzyme family. Homotetramer. Requires Mg(2+) as cofactor. It depends on thiamine diphosphate as a cofactor.

The protein localises to the peroxisome. It catalyses the reaction a 2-hydroxy-3-methyl fatty acyl-CoA = a 2-methyl-branched fatty aldehyde + formyl-CoA. The enzyme catalyses an (R)-2-hydroxy-long-chain-fatty acyl-CoA = a long-chain fatty aldehyde + formyl-CoA. The catalysed reaction is 2-hydroxy-3-methylhexadecanoyl-CoA = 2-methylpentadecanal + formyl-CoA. It carries out the reaction 2-hydroxyoctadecanoyl-CoA = heptadecanal + formyl-CoA. Peroxisomal 2-OH acyl-CoA lyase involved in the cleavage (C1 removal) reaction in the fatty acid alpha-oxydation in a thiamine pyrophosphate (TPP)-dependent manner. Involved in the degradation of 3-methyl-branched fatty acids and the shortening of 2-hydroxy long-chain fatty acids. This is 2-hydroxyacyl-CoA lyase 1 (hacl1) from Dictyostelium discoideum (Social amoeba).